Here is a 617-residue protein sequence, read N- to C-terminus: Urocanate reductase (617 aa).

Position 70 is an FMN phosphoryl threonine (T70). FAD-binding residues include A124, E143, N151, T152, G156, G157, and D387. R446 (proton donor) is an active-site residue. FAD contacts are provided by H553, E582, and L598.

It belongs to the FAD-dependent oxidoreductase 2 family. FRD/SDH subfamily. FAD serves as cofactor. Requires FMN as cofactor.

The catalysed reaction is dihydrourocanate + A = urocanate + AH2. In terms of biological role, catalyzes the two-electron reduction of urocanate to dihydrourocanate (also named imidazole propionate or deamino-histidine). Dihydrourocanate is present at higher concentrations in subjects with type 2 diabetes, and directly impairs glucose tolerance and insulin signaling at the level of insulin receptor substrate (IRS) through activation of p38 gamma (MAPK12)-p62-mTORC1. Therefore, the UrdA enzyme from the gut bacteria L.fermentum strain NBRC 3956 may contribute to the pathogenesis of type 2 diabetes by producing the microbial metabolite dihydrourocanate. The polypeptide is Urocanate reductase (Limosilactobacillus fermentum (strain NBRC 3956 / LMG 18251) (Lactobacillus fermentum)).